The sequence spans 206 residues: Superoxide dismutase [Mn] (206 aa).

Mn(2+) is bound by residues His-27, His-82, Asp-168, and His-172.

Belongs to the iron/manganese superoxide dismutase family. In terms of assembly, homodimer. It depends on Mn(2+) as a cofactor.

The catalysed reaction is 2 superoxide + 2 H(+) = H2O2 + O2. Its function is as follows. Destroys superoxide anion radicals which are normally produced within the cells and which are toxic to biological systems. The polypeptide is Superoxide dismutase [Mn] (sodA) (Escherichia coli (strain K12)).